The chain runs to 377 residues: RIB43A-like with coiled-coils protein 2 (377 aa).

The stretch at 188 to 238 (ELKFDEAARDLQRLEITTRKAVCAAVKEFNKKQVVELAERKRQVKQQEQED) forms a coiled coil. A disordered region spans residues 355–377 (QLDAAPSSQPTEDYFSQFNTRSR). The span at 360–377 (PSSQPTEDYFSQFNTRSR) shows a compositional bias: polar residues.

It belongs to the RIB43A family. As to quaternary structure, microtubule inner protein component of sperm flagellar doublet microtubules.

The protein localises to the cytoplasm. It is found in the cytoskeleton. It localises to the cilium axoneme. The protein resides in the flagellum axoneme. In terms of biological role, microtubule inner protein (MIP) part of the dynein-decorated doublet microtubules (DMTs) in cilia axoneme, which is required for motile cilia beating. This is RIB43A-like with coiled-coils protein 2 from Rattus norvegicus (Rat).